We begin with the raw amino-acid sequence, 611 residues long: Chloroplast sensor kinase, chloroplastic (611 aa).

The transit peptide at 1–79 directs the protein to the chloroplast; it reads MLLSAIASQT…PGGGETMVAS (79 aa). Positions 17 to 50 are disordered; sequence NLHFSNSIPNPRPSNPSLKLLNASSSSSSSSSSS. The span at 40–50 shows a compositional bias: low complexity; sequence SSSSSSSSSSS. The interval 116 to 300 is GAF; that stretch reads DFQRLCLEQL…VMDQKTMLLQ (185 aa). Cys121 serves as a coordination point for [3Fe-4S] cluster. Ser188 carries the phosphoserine modification. The Histidine kinase domain maps to 312–602; the sequence is KLVEQIRGPL…RVELWLPAFP (291 aa). Positions 345–380 form a coiled coil; sequence VEDLIVQGDQIKDTLEELQDAVHLTKANIVRHNEEA. Basic and acidic residues predominate over residues 385–402; that stretch reads NKTHNETRRSKYEHKDPI. A disordered region spans residues 385 to 420; it reads NKTHNETRRSKYEHKDPIDGSQISSTRLSLGSGLDD.

It belongs to the chloroplast sensor kinase protein family. As to quaternary structure, self-interacts. Interacts with the plastoquinone analog 2,5-dibromo-3-methyl-5-isopropyl-p-benzoquinone (DBMIB) and with SIGA/SIG1. [3Fe-4S] cluster serves as cofactor. Post-translationally, autophosphorylated, possibly on tyrosine residues, in photosystem I (PS I) light and in the presence of manganese ions Mn(2+), to a lesser degree, in the presence of calcium ions Ca(2+), but not in the presence of magnesium ions Mg(2+). Dithiothreitol (DTT) stimulates autophosphorylation. Phosphorylated on Ser-188 in vivo after exposure to far-red light (when plastoquinone (PQ) is oxidized). Not phosphorylated under orange light (reduces PQ).

It is found in the plastid. Its subcellular location is the chloroplast stroma. The catalysed reaction is L-tyrosyl-[protein] + ATP = O-phospho-L-tyrosyl-[protein] + ADP + H(+). Its function is as follows. Sensor kinase that senses the plastoquinone (PQ) redox state involved in stoichiometry adjustment of both photosystems (e.g. long-term adaptation via transcriptional regulation of reaction center genes of photosystems I and II) and state transitions (e.g. short-term adaptation involving reversible post-translational phosphorylation of light-harvesting complex II, LHC II), thus linking photosynthesis with gene expression in chloroplasts. Autophosphorylates, probably on a tyrosine residue. Probably phosphorylates SIGA/SIG1 in response to plastoquinone redox state modification. Reduced PQ suppresses its autophosphorylation activity. Represses expression of a number of chloroplast-encoded genes. This is Chloroplast sensor kinase, chloroplastic from Arabidopsis thaliana (Mouse-ear cress).